A 177-amino-acid polypeptide reads, in one-letter code: Translation initiation factor IF-3 (177 aa).

This sequence belongs to the IF-3 family. In terms of assembly, monomer.

The protein localises to the cytoplasm. IF-3 binds to the 30S ribosomal subunit and shifts the equilibrium between 70S ribosomes and their 50S and 30S subunits in favor of the free subunits, thus enhancing the availability of 30S subunits on which protein synthesis initiation begins. The protein is Translation initiation factor IF-3 of Rhizobium meliloti (strain 1021) (Ensifer meliloti).